Here is a 102-residue protein sequence, read N- to C-terminus: Small ribosomal subunit protein uS10 (102 aa).

Belongs to the universal ribosomal protein uS10 family. In terms of assembly, part of the 30S ribosomal subunit.

In terms of biological role, involved in the binding of tRNA to the ribosomes. The chain is Small ribosomal subunit protein uS10 from Coprothermobacter proteolyticus (strain ATCC 35245 / DSM 5265 / OCM 4 / BT).